The sequence spans 337 residues: MAASQVPGEINIQAGETAKSGDRDLLGNDCRDQDRLPQRSWRQKCASYVLALRPWSFSASLTPVALGSALAYRSQGVLDPRLLVGCAVAVLAVHGAGNLVNTYYDFSKGIDHKKSDDRTLVDRILEPQDVVLFGVFLYTLGCVCAACLYCLSPLKLEHLALIYFGGLSGSFLYTGGIGFKYVALGDLVILITFGPLAVMFAYAVQVGSLAVFPLVYAIPLALSTEAVLHSNNTRDMESDREAGIVTLAILIGPTLSYVLYNTLLFLPYLIFSILATHCSISLALPLLTVPMAFSLERQFRSQTFNKLPQRTAKLNLLLGLFYVFGIILAPAGSLPKL.

A2 carries the post-translational modification N-acetylalanine. Helical transmembrane passes span 82–102 (LLVGCAVAVLAVHGAGNLVNT), 133–153 (FGVFLYTLGCVCAACLYCLSP), 159–179 (LALIYFGGLSGSFLYTGGIGF), 187–207 (LVILITFGPLAVMFAYAVQVG), 208–228 (SLAVFPLVYAIPLALSTEAVL), 244–266 (IVTLAILIGPTLSYVLYNTLLFL), 276–296 (THCSISLALPLLTVPMAFSLE), and 314–334 (LNLLLGLFYVFGIILAPAGSL).

This sequence belongs to the UbiA prenyltransferase family. As to quaternary structure, interacts with HMGCR and SOAT1.

The protein resides in the endoplasmic reticulum membrane. The protein localises to the golgi apparatus membrane. Its subcellular location is the mitochondrion membrane. The enzyme catalyses menadiol + (2E,6E,10E)-geranylgeranyl diphosphate = menaquinol-4 + diphosphate. The catalysed reaction is all-trans-decaprenyl diphosphate + 4-hydroxybenzoate = 4-hydroxy-3-(all-trans-decaprenyl)benzoate + diphosphate. The protein operates within quinol/quinone metabolism; menaquinone biosynthesis. It functions in the pathway cofactor biosynthesis; ubiquinone biosynthesis. Functionally, prenyltransferase that mediates the formation of menaquinone-4 (MK-4) and coenzyme Q10. MK-4 is a vitamin K2 isoform required for endothelial cell development. Mediates the conversion of phylloquinone (PK) into MK-4, probably by cleaving the side chain of phylloquinone (PK) to release 2-methyl-1,4-naphthoquinone (menadione; K3) and then prenylating it with geranylgeranyl pyrophosphate (GGPP) to form MK-4. Also plays a role in cardiovascular development independently of MK-4 biosynthesis, by acting as a coenzyme Q10 biosynthetic enzyme: coenzyme Q10, also named ubiquinone, plays an important antioxidant role in the cardiovascular system. Mediates biosynthesis of coenzyme Q10 in the Golgi membrane, leading to protect cardiovascular tissues from NOS3/eNOS-dependent oxidative stress. This chain is UbiA prenyltransferase domain-containing protein 1 (UBIAD1), found in Ailuropoda melanoleuca (Giant panda).